The following is a 392-amino-acid chain: Probable glycerol-3-phosphate dehydrogenase 2 (392 aa).

NAD(+) is bound by residues glycine 42–glycine 47, phenylalanine 130, lysine 153, and alanine 196. Residue lysine 153 coordinates substrate. The active-site Proton acceptor is lysine 248. The NAD(+) site is built by arginine 312 and glutamine 341. Arginine 312 to asparagine 313 is a substrate binding site.

The protein belongs to the NAD-dependent glycerol-3-phosphate dehydrogenase family. Homodimer.

It is found in the cytoplasm. The enzyme catalyses sn-glycerol 3-phosphate + NAD(+) = dihydroxyacetone phosphate + NADH + H(+). The sequence is that of Probable glycerol-3-phosphate dehydrogenase 2 (gpdh-2) from Caenorhabditis elegans.